Reading from the N-terminus, the 429-residue chain is Citrate synthase, plasmid (429 aa).

Active-site residues include histidine 306 and aspartate 364.

This sequence belongs to the citrate synthase family.

The catalysed reaction is oxaloacetate + acetyl-CoA + H2O = citrate + CoA + H(+). Its pathway is carbohydrate metabolism; tricarboxylic acid cycle; isocitrate from oxaloacetate: step 1/2. Functionally, the exact function of the plasmid-encoded citrate synthase is not clear, it could help nodulation by allowing the bacteria to use citrate as a chelator of iron and calcium. This chain is Citrate synthase, plasmid (pcsA), found in Rhizobium tropici.